A 450-amino-acid polypeptide reads, in one-letter code: Cyclin-A2-3 (450 aa).

Disordered regions lie at residues 18-53 (ALRA…NKRK) and 75-94 (NSKQ…SQLA). Polar residues predominate over residues 23–34 (EVTSTTQNQQRV).

Belongs to the cyclin family. Cyclin AB subfamily. As to quaternary structure, interacts with CDKA-1. Interacts with SAMBA.

The protein resides in the nucleus. Functionally, negatively regulates endocycles and acts as a regulator of ploidy levels in endoreduplication. Promotes divisions in the guard cells (GCs) after the guard mother cells (GMC) symmetric division. This Arabidopsis thaliana (Mouse-ear cress) protein is Cyclin-A2-3 (CYCA2-3).